The chain runs to 369 residues: Glutamate 5-kinase (369 aa).

Lysine 9 lines the ATP pocket. 3 residues coordinate substrate: serine 49, aspartate 136, and asparagine 148. Residues 168-169 and 210-216 each bind ATP; these read TD and TGGMLTK. The region spanning 275 to 355 is the PUA domain; it reads QGSIWVDKGA…KGVLIYRDDW (81 aa).

This sequence belongs to the glutamate 5-kinase family.

Its subcellular location is the cytoplasm. It catalyses the reaction L-glutamate + ATP = L-glutamyl 5-phosphate + ADP. It participates in amino-acid biosynthesis; L-proline biosynthesis; L-glutamate 5-semialdehyde from L-glutamate: step 1/2. In terms of biological role, catalyzes the transfer of a phosphate group to glutamate to form L-glutamate 5-phosphate. The protein is Glutamate 5-kinase of Streptococcus pneumoniae serotype 4 (strain ATCC BAA-334 / TIGR4).